The following is a 286-amino-acid chain: uncharacterized protein (286 aa).

Disordered stretches follow at residues 59–89 (PESA…PGAK) and 225–286 (RQRK…EDTR). Residues 69-85 (AEAESAGTAAATESHGA) are compositionally biased toward low complexity.

This is an uncharacterized protein from Mus musculus (Mouse).